Reading from the N-terminus, the 593-residue chain is Tyrosine-protein phosphatase non-receptor type 11 (593 aa).

SH2 domains follow at residues 6–102 and 112–216; these read WFHP…KYPL and WFHG…KQPL. Positions 247–521 constitute a Tyrosine-protein phosphatase domain; it reads FWEEFETLQQ…RFIYMAVQHY (275 aa). Substrate-binding positions include Asp425, 459–465, and Gln506; that span reads CSAGIGR. Cys459 (phosphocysteine intermediate) is an active-site residue. Over residues 548 to 557 the composition is skewed to polar residues; that stretch reads SLSDQTSGDQ. The disordered stretch occupies residues 548 to 575; it reads SLSDQTSGDQSPLPPCTPTPTCPEMRED. Pro residues predominate over residues 559–568; sequence PLPPCTPTPT.

Belongs to the protein-tyrosine phosphatase family. Non-receptor class 2 subfamily. In terms of processing, phosphorylated by tyrosine-protein kinases. In terms of tissue distribution, expressed in embryonic fibroblast, hematopoietic, erythroid, myeloid and lymphoid cells.

It localises to the cytoplasm. The enzyme catalyses O-phospho-L-tyrosyl-[protein] + H2O = L-tyrosyl-[protein] + phosphate. Functionally, this PTPase activity may directly link growth factor receptors and other signaling proteins through protein-tyrosine phosphorylation. The SH2 regions may interact with other cellular components to modulate its own phosphatase activity against interacting substrates. May play a positive role during the stages of erythroid cell proliferation. This is Tyrosine-protein phosphatase non-receptor type 11 (PTPN11) from Gallus gallus (Chicken).